The sequence spans 962 residues: Exportin-T (962 aa).

An N-acetylmethionine modification is found at Met1. Residue Lys634 is modified to N6-acetyllysine.

Found in a complex with XPOT, Ran and tRNA. Probably found in a complex with nucleoporins. Interacts with Ran and tRNA in a GTP-dependent manner.

It is found in the nucleus. It localises to the cytoplasm. Functionally, mediates the nuclear export of aminoacylated tRNAs. In the nucleus binds to tRNA and to the GTPase Ran in its active GTP-bound form. Docking of this trimeric complex to the nuclear pore complex (NPC) is mediated through binding to nucleoporins. Upon transit of a nuclear export complex into the cytoplasm, disassembling of the complex and hydrolysis of Ran-GTP to Ran-GDP (induced by RANBP1 and RANGAP1, respectively) cause release of the tRNA from the export receptor. XPOT then return to the nuclear compartment and mediate another round of transport. The directionality of nuclear export is thought to be conferred by an asymmetric distribution of the GTP- and GDP-bound forms of Ran between the cytoplasm and nucleus. This is Exportin-T (XPOT) from Pongo abelii (Sumatran orangutan).